A 3133-amino-acid chain; its full sequence is Hemocytin (3133 aa).

Residues 40 to 96 form the TIL 1 domain; that stretch reads CTGGQQYTVCADSCLRKCSDTALAASGQCKPVCVEGCACSPSQLLDDNGVCVPVAKC. N-linked (GlcNAc...) asparagine glycosylation is present at Asn151. Positions 153 to 209 constitute a TIL 2 domain; it reads TAQNMEFTTCETSEPLTCKNMHLPPSTQTAECRPGCQCKKGQVLDTASKRCVPATQC. An N-linked (GlcNAc...) asparagine glycan is attached at Asn237. The 172-residue stretch at 247 to 418 folds into the VWFD 1 domain; that stretch reads GVCGAWGDSH…DSWKLKPTCP (172 aa). Cystine bridges form between Cys249–Cys380, Cys271–Cys417, and Cys295–Cys302. A TIL 3 domain is found at 509-576; the sequence is CDEVCSNYDS…TTECVPRAKC (68 aa). A glycan (N-linked (GlcNAc...) asparagine) is linked at Asn564. Positions 661-680 are disordered; the sequence is PDGQSVESEPLPKPNELQIG. The region spanning 770–837 is the TIL 4 domain; it reads CPPGEVYQAC…ERTCVPVKDC (68 aa). The segment at 899 to 924 is disordered; it reads STTTTTTTSTTTTTTTPEPTETTTET. 2 cysteine pairs are disulfide-bonded: Cys940–Cys1095 and Cys1116–Cys1254. F5/8 type C domains lie at 940–1095 and 1116–1254; these read CSPD…IIGC and CTEP…PIGC. 5 N-linked (GlcNAc...) asparagine glycosylation sites follow: Asn1170, Asn1387, Asn1622, Asn1727, and Asn1847. In terms of domain architecture, VWFD 2 spans 1619–1794; it reads VFCNMTGRTF…KPGVPADACA (176 aa). 2 disulfide bridges follow: Cys1621–Cys1754 and Cys1641–Cys1793. One can recognise a TIL 5 domain in the interval 1890-1948; that stretch reads CPPPLVHYDCYRKRCEETCAPYPNAARACPAQEGQCSPGCYCPDGKLRKGDQCVLPADC. Positions 1951-2136 constitute a VWFD 3 domain; that stretch reads CTCTGVGTPA…WQASPEKLTE (186 aa). 2 disulfide bridges follow: Cys1953–Cys2099 and Cys2001–Cys2009. N-linked (GlcNAc...) asparagine glycosylation is found at Asn1975 and Asn1985. 5 N-linked (GlcNAc...) asparagine glycosylation sites follow: Asn2093, Asn2113, Asn2161, Asn2276, and Asn2451. Residues 2229 to 2285 form the TIL 6 domain; it reads CEEPFVYRACVDCERTCDNYEQLQTSPEKCTNKPVEGCFCPEGKVRVNNTCIEPGKC. Positions 2553 to 2622 constitute a VWFC 1 domain; it reads VACRHQDNVY…DSGQCCGKCE (70 aa). 9 N-linked (GlcNAc...) asparagine glycosylation sites follow: Asn2647, Asn2654, Asn2663, Asn2794, Asn2810, Asn2865, Asn2929, Asn2964, and Asn3028. A VWFC 2 domain is found at 2842-2907; that stretch reads VACRDGDKIY…AADHCCGRCV (66 aa). 4 disulfide bridges follow: Cys2971-Cys3040, Cys2991-Cys3054, Cys3004-Cys3070, and Cys3020-Cys3072. The CTCK domain occupies 2971 to 3076; the sequence is CNEKPQALSK…PARCHCAACG (106 aa).

Post-translationally, may be converted into the 260 kDa mature hemocytin by proteolysis.

Functionally, adhesive protein and relates to hemostasis or encapsulation of foreign substances for self-defense. This Bombyx mori (Silk moth) protein is Hemocytin.